Here is a 236-residue protein sequence, read N- to C-terminus: (5-formylfuran-3-yl)methyl phosphate synthase (236 aa).

The active-site Schiff-base intermediate with substrate is the Lys-27. Residue Lys-85 is the Proton acceptor of the active site.

This sequence belongs to the MfnB family.

The enzyme catalyses 2 D-glyceraldehyde 3-phosphate = 4-(hydroxymethyl)-2-furancarboxaldehyde phosphate + phosphate + 2 H2O. Its pathway is cofactor biosynthesis; methanofuran biosynthesis. Functionally, catalyzes the formation of 4-(hydroxymethyl)-2-furancarboxaldehyde phosphate (4-HFC-P) from two molecules of glyceraldehyde-3-P (GA-3-P). In Methanococcus maripaludis (strain C6 / ATCC BAA-1332), this protein is (5-formylfuran-3-yl)methyl phosphate synthase.